The primary structure comprises 969 residues: Leucine--tRNA ligase (969 aa).

The short motif at 46 to 56 (PYLNGVLHAGH) is the 'HIGH' region element. Positions 658-662 (KLSKS) match the 'KMSKS' region motif. Lys661 provides a ligand contact to ATP.

This sequence belongs to the class-I aminoacyl-tRNA synthetase family.

It is found in the cytoplasm. The catalysed reaction is tRNA(Leu) + L-leucine + ATP = L-leucyl-tRNA(Leu) + AMP + diphosphate. In Methanococcus aeolicus (strain ATCC BAA-1280 / DSM 17508 / OCM 812 / Nankai-3), this protein is Leucine--tRNA ligase.